The chain runs to 198 residues: Alkyl hydroperoxide reductase C (198 aa).

The 162-residue stretch at 2–163 folds into the Thioredoxin domain; it reads TLVTQKAPNF…MIRMIDALNF (162 aa). C50 functions as the Cysteine sulfenic acid (-SOH) intermediate in the catalytic mechanism.

The protein belongs to the peroxiredoxin family. AhpC/Prx1 subfamily. In terms of assembly, homodimer; disulfide-linked, upon oxidation. 5 homodimers assemble to form a ring-like decamer.

It is found in the cytoplasm. The catalysed reaction is a hydroperoxide + NADH + H(+) = an alcohol + NAD(+) + H2O. Thiol-specific peroxidase that catalyzes the reduction of hydrogen peroxide and organic hydroperoxides to water and alcohols, respectively. Plays a role in cell protection against oxidative stress by detoxifying peroxides. The polypeptide is Alkyl hydroperoxide reductase C (Buchnera aphidicola subsp. Schizaphis graminum (strain Sg)).